The primary structure comprises 140 residues: MLPAAMKGLGLALLAVLLCSAPAHGLWCQDCTLTTNSSHCTPKQCQPSDTVCASVRITDPSSSRKDHSVNKMCASSCDFVKRHFFSDYLMGFINSGILKVDVDCYEKDLCNGVAGAGHSPWALAGGLLLSLGPALLWAGP.

Positions 1–25 (MLPAAMKGLGLALLAVLLCSAPAHG) are cleaved as a signal peptide. One can recognise a UPAR/Ly6 domain in the interval 26–91 (LWCQDCTLTT…RHFFSDYLMG (66 aa)). Cystine bridges form between C28-C52, C31-C40, C45-C73, and C77-C104. N36 carries N-linked (GlcNAc...) asparagine glycosylation. Residue G115 is the site of GPI-anchor amidated glycine attachment. Residues 116-140 (AGHSPWALAGGLLLSLGPALLWAGP) constitute a propeptide, removed in mature form.

As to quaternary structure, interacts with CHRNA4 and CHRNA7.

It is found in the cell membrane. Believed to act as a modulator of nicotinic acetylcholine receptors (nAChRs) activity. In vitro inhibits alpha-3:beta-4-containing nAChRs maximum response. May play a role in the intracellular trafficking of alpha-7-containing nAChRs and may inhibit their expression at the cell surface. Seems to inhibit alpha-7/CHRNA7 signaling in hippocampal neurons. The chain is Lymphocyte antigen 6H (LY6H) from Macaca fascicularis (Crab-eating macaque).